The following is a 157-amino-acid chain: Endoribonuclease YbeY (157 aa).

Positions 112, 116, and 122 each coordinate Zn(2+).

It belongs to the endoribonuclease YbeY family. Requires Zn(2+) as cofactor.

The protein localises to the cytoplasm. In terms of biological role, single strand-specific metallo-endoribonuclease involved in late-stage 70S ribosome quality control and in maturation of the 3' terminus of the 16S rRNA. In Marinobacter nauticus (strain ATCC 700491 / DSM 11845 / VT8) (Marinobacter aquaeolei), this protein is Endoribonuclease YbeY.